A 105-amino-acid chain; its full sequence is MSQGFKTEADVMRNTAHRVDDTNQEVSAELSRLRSIVDGVRASWEGTAQVSFDNLMQRWDASAKGLQDALQSISDNIRGNATSFENVEADNQSAFSAVGGQGLAL.

Residues 1–23 (MSQGFKTEADVMRNTAHRVDDTN) form a disordered region. Positions 7–21 (TEADVMRNTAHRVDD) are enriched in basic and acidic residues.

The protein belongs to the WXG100 family. CFP-10 subfamily. In terms of assembly, forms a tight 1:1 complex with EsxB.

In Corynebacterium diphtheriae (strain ATCC 700971 / NCTC 13129 / Biotype gravis), this protein is ESAT-6-like protein EsxB.